The following is a 171-amino-acid chain: Probable DNA-directed RNA polymerase subunit delta (171 aa).

The 68-residue stretch at 14 to 81 (MALVEIAYEI…SDQTWGLRSW (68 aa)) folds into the HTH HARE-type domain. A disordered region spans residues 138-171 (EFDEIDEADDDELDDLEDEILDDDEDFDEEEDEE).

Belongs to the RpoE family. In terms of assembly, RNAP is composed of a core of 2 alpha, a beta and a beta' subunits. The core is associated with a delta subunit and one of several sigma factors.

Participates in both the initiation and recycling phases of transcription. In the presence of the delta subunit, RNAP displays an increased specificity of transcription, a decreased affinity for nucleic acids, and an increased efficiency of RNA synthesis because of enhanced recycling. The protein is Probable DNA-directed RNA polymerase subunit delta of Bacillus licheniformis (strain ATCC 14580 / DSM 13 / JCM 2505 / CCUG 7422 / NBRC 12200 / NCIMB 9375 / NCTC 10341 / NRRL NRS-1264 / Gibson 46).